Consider the following 788-residue polypeptide: Ribonucleoside-diphosphate reductase subunit alpha (788 aa).

The region spanning 2–92 is the ATP-cone domain; it reads ITVVKRNGRI…LYDLYHKVSG (91 aa). Residues K6, 12 to 18, and T52 each bind ATP; that span reads EPLDITK. T200 contributes to the GDP binding site. C216 and C497 are oxidised to a cystine. Residues 223–225 and R253 contribute to the dTTP site; that span reads DNI. N424 serves as a coordination point for GDP. N424 (proton acceptor) is an active-site residue. C426 functions as the Cysteine radical intermediate in the catalytic mechanism. GDP-binding positions include E428 and 661–663; that span reads SSI. E428 serves as the catalytic Proton acceptor.

The protein belongs to the ribonucleoside diphosphate reductase large chain family. Tetramer of two alpha and two beta subunits.

The catalysed reaction is a 2'-deoxyribonucleoside 5'-diphosphate + [thioredoxin]-disulfide + H2O = a ribonucleoside 5'-diphosphate + [thioredoxin]-dithiol. Under complex allosteric control mediated by deoxynucleoside triphosphates and ATP binding to separate specificity and activation sites on the alpha subunit. The type of nucleotide bound at the specificity site determines substrate preference. It seems probable that ATP makes the enzyme reduce CDP and UDP, dGTP favors ADP reduction and dTTP favors GDP reduction. Stimulated by ATP and inhibited by dATP binding to the activity site. Functionally, provides the precursors necessary for DNA synthesis. Catalyzes the biosynthesis of deoxyribonucleotides from the corresponding ribonucleotides. The chain is Ribonucleoside-diphosphate reductase subunit alpha (nrdA) from Helicobacter pylori (strain J99 / ATCC 700824) (Campylobacter pylori J99).